The sequence spans 657 residues: UvrABC system protein B (657 aa).

The Helicase ATP-binding domain maps to 25–163 (ASIKNGNKYQ…QGMVLFLEIN (139 aa)). 38–45 (GVTGSGKT) serves as a coordination point for ATP. A Beta-hairpin motif is present at residues 91-114 (YYDYYQPEAYIPRQDLFIEKDSSI). The short motif at 130 to 133 (LSFD) is the DEAD box element. A Helicase C-terminal domain is found at 433-599 (QVEILYDMAK…SVSRNVEESL (167 aa)). In terms of domain architecture, UVR spans 622-657 (AKIVKDLRKQMMEAADKLEFEKAAALRDEIKKMRKL).

Belongs to the UvrB family. In terms of assembly, forms a heterotetramer with UvrA during the search for lesions. Interacts with UvrC in an incision complex.

It localises to the cytoplasm. The UvrABC repair system catalyzes the recognition and processing of DNA lesions. A damage recognition complex composed of 2 UvrA and 2 UvrB subunits scans DNA for abnormalities. Upon binding of the UvrA(2)B(2) complex to a putative damaged site, the DNA wraps around one UvrB monomer. DNA wrap is dependent on ATP binding by UvrB and probably causes local melting of the DNA helix, facilitating insertion of UvrB beta-hairpin between the DNA strands. Then UvrB probes one DNA strand for the presence of a lesion. If a lesion is found the UvrA subunits dissociate and the UvrB-DNA preincision complex is formed. This complex is subsequently bound by UvrC and the second UvrB is released. If no lesion is found, the DNA wraps around the other UvrB subunit that will check the other stand for damage. This Campylobacter hominis (strain ATCC BAA-381 / DSM 21671 / CCUG 45161 / LMG 19568 / NCTC 13146 / CH001A) protein is UvrABC system protein B.